The chain runs to 224 residues: Large ribosomal subunit protein bL25 (224 aa).

The disordered stretch occupies residues valine 196–glutamate 224. A compositionally biased stretch (acidic residues) spans glutamate 197–alanine 208.

Belongs to the bacterial ribosomal protein bL25 family. CTC subfamily. Part of the 50S ribosomal subunit; part of the 5S rRNA/L5/L18/L25 subcomplex. Contacts the 5S rRNA. Binds to the 5S rRNA independently of L5 and L18.

This is one of the proteins that binds to the 5S RNA in the ribosome where it forms part of the central protuberance. This is Large ribosomal subunit protein bL25 from Psychrobacter sp. (strain PRwf-1).